The primary structure comprises 1488 residues: Chromosome partition protein MukB (1488 aa).

34 to 41 lines the ATP pocket; it reads GGNGAGKS. Coiled coils occupy residues 326–413, 444–472, and 509–602; these read LEAD…QTRA, LDTF…QTAH, and RHLA…RRAP. The interval 666–783 is flexible hinge; it reads PGGAEDQRLN…SLPIFGRAAR (118 aa). Coiled-coil stretches lie at residues 835–923, 977–1116, and 1209–1265; these read EAEI…AKLE, EMLS…AKAG, and VEAI…LQSV.

Belongs to the SMC family. MukB subfamily. Homodimerization via its hinge domain. Binds to DNA via its C-terminal region. Interacts, and probably forms a ternary complex, with MukE and MukF via its C-terminal region. The complex formation is stimulated by calcium or magnesium. Interacts with tubulin-related protein FtsZ.

The protein resides in the cytoplasm. It localises to the nucleoid. Plays a central role in chromosome condensation, segregation and cell cycle progression. Functions as a homodimer, which is essential for chromosome partition. Involved in negative DNA supercoiling in vivo, and by this means organize and compact chromosomes. May achieve or facilitate chromosome segregation by condensation DNA from both sides of a centrally located replisome during cell division. The chain is Chromosome partition protein MukB from Salmonella paratyphi C (strain RKS4594).